The chain runs to 161 residues: MAAEILEVADLPARVGPRQRLIGIDLGTKTIGLALSDVERRIATPLETIQRIKFSKDAVRLIELAEKFDAGALIIGLPLNMDGSQGPRVQATRAFVRSLSALVSKPFVYWDERLSTAAVTRSLIDQDVSRLKRAEVVDKMAAAYILQGVLDRLRRIEADAV.

The protein belongs to the YqgF nuclease family.

The protein localises to the cytoplasm. Could be a nuclease involved in processing of the 5'-end of pre-16S rRNA. The polypeptide is Putative pre-16S rRNA nuclease (Methylocella silvestris (strain DSM 15510 / CIP 108128 / LMG 27833 / NCIMB 13906 / BL2)).